Here is a 326-residue protein sequence, read N- to C-terminus: Apoptosis facilitator Bcl-2-like protein 14 (326 aa).

Position 44 is a phosphoserine (Ser44). Residues 99–127 (TEKEEEPPSSPKEIHAQGPFPVERQGRNQ) form a disordered region. Residues 211–225 (IVELLKYSGDQLGRE) carry the BH3 motif. Positions 307–314 (WVQQNGGW) match the BH2 motif.

It belongs to the Bcl-2 family. Phosphorylated by MELK, leading to inhibit its pro-apoptotic function.

The protein resides in the cytoplasm. In terms of biological role, plays a role in apoptosis. This is Apoptosis facilitator Bcl-2-like protein 14 (Bcl2l14) from Rattus norvegicus (Rat).